We begin with the raw amino-acid sequence, 364 residues long: Protein L-Myc (364 aa).

3 disordered regions span residues 41–81 (TSPP…HSKG), 111–172 (DRLA…EIDV), and 219–285 (PPES…KRKN). Basic and acidic residues predominate over residues 228–245 (ASERGPQEEVLERDAAGE). The 53-residue stretch at 281–333 (TKRKNHNFLERKRRNDLRSRFLALRDQVPTLASCSKAPKVVILSKALEYLQAL) folds into the bHLH domain. The segment at 333–361 (LVGAEKRMATEKRQLRCRQQQLQKRIAYL) is leucine-zipper.

In terms of assembly, efficient DNA binding requires dimerization with another bHLH protein. Binds DNA as a heterodimer with MAX.

Its subcellular location is the nucleus. This chain is Protein L-Myc (MYCL), found in Homo sapiens (Human).